The following is a 140-amino-acid chain: MSRTKQTASKALGGKAPRKGISAKSIPSSGCSPAMPKRTRFKAGALALKEIRKYQKSTDLLIRKRPFQRMVRDLCKGREGVRFQASAIVAFQEAVENFLTSLMEDAYRCVLHAKRVTLMPKDICLVYKIKYANILYAALD.

The segment at 1 to 36 (MSRTKQTASKALGGKAPRKGISAKSIPSSGCSPAMP) is disordered. Lys-5 bears the N6,N6,N6-trimethyllysine; alternate mark. Lys-5 is modified (N6,N6-dimethyllysine; alternate). N6-methyllysine; alternate occurs at positions 5 and 10. Residues Lys-10, Lys-15, Lys-19, and Lys-24 each carry the N6-acetyllysine; alternate modification. Residue Lys-15 is modified to N6,N6-dimethyllysine; alternate. N6-methyllysine; alternate is present on residues Lys-19 and Lys-24. Residues Lys-56 and Lys-64 each carry the N6-acetyllysine modification.

Belongs to the histone H3 family. As to quaternary structure, the nucleosome is a histone octamer containing two molecules each of H2A, H2B, H3 and H4 assembled in one H3-H4 heterotetramer and two H2A-H2B heterodimers. The octamer wraps approximately 147 bp of DNA. Mono-, di- and trimethylated to form H3K4me1/2/3. H3K4me activates gene expression by regulating transcription elongation and plays a role in telomere length maintenance. H3K4me enrichment correlates with transcription levels, and occurs in a 5' to 3' gradient with H3K4me3 enrichment at the 5'-end of genes, shifting to H3K4me2 and then H3K4me1. In terms of processing, acetylation of histone H3 leads to transcriptional activation.

Its subcellular location is the nucleus. The protein localises to the chromosome. Functionally, core component of nucleosome. Nucleosomes wrap and compact DNA into chromatin, limiting DNA accessibility to the cellular machineries which require DNA as a template. Histones thereby play a central role in transcription regulation, DNA repair, DNA replication and chromosomal stability. DNA accessibility is regulated via a complex set of post-translational modifications of histones, also called histone code, and nucleosome remodeling. The protein is Histone H3-like protein of Encephalitozoon cuniculi (strain GB-M1) (Microsporidian parasite).